A 192-amino-acid chain; its full sequence is Small ribosomal subunit protein bS16 (192 aa).

Residues 153-192 form a disordered region; it reads AEAKAKAEAEAAAAAEEAAETEETPVEAAAEEAPAAESAE. A compositionally biased stretch (low complexity) spans 178–192; the sequence is VEAAAEEAPAAESAE.

Belongs to the bacterial ribosomal protein bS16 family.

This Porphyromonas gingivalis (strain ATCC BAA-308 / W83) protein is Small ribosomal subunit protein bS16.